The chain runs to 924 residues: MEIKEEGASEEGQHFLPTAQANDPGDCQFTSIQKTPNEPQLEFILACKDLVAPVRDRKLNTLVQISVIHPVEQSLTRYSSTEIVEGTRDPLFLTGVTFPSEYPIYEETKIKLTVYDVKDKSHDTVRTSVLPEHKDPPPEVGRSFLGYASFKVGELLKSKEQLLVLSLRTSDGGKVVGTIEVSVVKMGEIEDGEADHITTDVQGQKCALVCECTAPESVSGKDNLPFLNSVLKNPVCKLYRFPTSDNKWMRIREQMSESILSFHIPKELISLHIKEDLCRNQEIKELGELSPHWDNLRKNVLTHCDQMVNMYQDILTELSKETGSSFKSSSSKGEKTLEFVPINLHLQRMQVHSPHLKDALYDVITVGAPAAHFQGFKNGGLRKLLHRFETERRNTGYQFIYYSPENTAKAKEVLSNINQLQPLIATHADLLLNSASQHSPDSLKNSLKMLSEKTELFVHAFKDQLVRSALLALYTARPGGILKKPPSPKSSTEESSPQDQPPVMRGQDSIPHHSDYDEEEWDRVWANVGKSLNCIIAMVDKLIERDGGSEGSGGNNDGEKEPSLTDAIPSHPREDWYEQLYPLILTLKDCMGEVVNRAKQSLTFVLLQELAYSLPQCLMLTLRRDIVFSQALAGLVCGFIIKLQTSLYDPGFLQQLHTVGLIVQYEGLLSTYSDEIGMLEDMAVGISDLKKVAFKIIEAKSNDVLPVITGRREHYVVEVKLPARMFESLPLQIKEGQLLHVYPVLFNVGINEQQTLAERFGDVSLQESINQENFELLQEYYKIFMEKMPPDYISHFQEQNDLKALLENLLQNIQSKKRKNVEIMWLAATICRKLNGIRFTCCKSAKDRTSMSVTLEQCSILRDEHQLHKDFFIRALDCMRREGCRIENVLKNIKCRKYAFNMLQLMAFPKYYRPPEGTYGKADT.

A compositionally biased stretch (basic and acidic residues) spans M1–Q13. Disordered stretches follow at residues M1 to P24, I481 to Y516, and D546 to S570. One can recognise a C2 domain in the interval D23 to L165.

The protein belongs to the inositol 3,4-bisphosphate 4-phosphatase family. Widely expressed with highest levels occurring in the skeletal muscle and heart.

It catalyses the reaction a 1,2-diacyl-sn-glycero-3-phospho-(1D-myo-inositol-3,4-bisphosphate) + H2O = a 1,2-diacyl-sn-glycero-3-phospho-(1D-myo-inositol-3-phosphate) + phosphate. It carries out the reaction 1D-myo-inositol 1,3,4-trisphosphate + H2O = 1D-myo-inositol 1,3-bisphosphate + phosphate. The catalysed reaction is 1D-myo-inositol 3,4-bisphosphate + H2O = 1D-myo-inositol 3-phosphate + phosphate. Its pathway is signal transduction; phosphatidylinositol signaling pathway. With respect to regulation, strongly inhibited by inositol hexakisphosphate. Functionally, catalyzes the hydrolysis of the 4-position phosphate of phosphatidylinositol 3,4-bisphosphate, inositol 1,3,4-trisphosphate and inositol 3,4-trisphosphate. Plays a role in the late stages of macropinocytosis by dephosphorylating phosphatidylinositol 3,4-bisphosphate in membrane ruffles. The lipid phosphatase activity is critical for tumor suppressor function. Antagonizes the PI3K-AKT/PKB signaling pathway by dephosphorylating phosphoinositides and thereby modulating cell cycle progression and cell survival. This chain is Inositol polyphosphate 4-phosphatase type II (INPP4B), found in Homo sapiens (Human).